The sequence spans 308 residues: Ribosomal RNA large subunit methyltransferase F (308 aa).

It belongs to the methyltransferase superfamily. METTL16/RlmF family.

It localises to the cytoplasm. The enzyme catalyses adenosine(1618) in 23S rRNA + S-adenosyl-L-methionine = N(6)-methyladenosine(1618) in 23S rRNA + S-adenosyl-L-homocysteine + H(+). In terms of biological role, specifically methylates the adenine in position 1618 of 23S rRNA. This chain is Ribosomal RNA large subunit methyltransferase F, found in Escherichia coli O157:H7.